A 77-amino-acid chain; its full sequence is MWHLKLCAVLMIFLLLLGQIDGSPIPEVSSAKRRPRRMTPFWRGVSLRPIGASCRDDSECITRLCRKRRCSLSVAQE.

The signal sequence occupies residues 1–22; it reads MWHLKLCAVLMIFLLLLGQIDG. Positions 23 to 37 are excised as a propeptide; it reads SPIPEVSSAKRRPRR. Intrachain disulfides connect cysteine 54-cysteine 65 and cysteine 60-cysteine 70.

It belongs to the LEAP2 family.

The protein localises to the secreted. Functionally, has an antimicrobial activity. The sequence is that of Liver-expressed antimicrobial peptide 2 (LEAP2) from Homo sapiens (Human).